The primary structure comprises 841 residues: Toll-like receptor 4 (841 aa).

The N-terminal stretch at 1–23 (MMARVRLAAALIPATAILSCLRT) is a signal peptide. Topologically, residues 24 to 632 (ESWDPCVQVV…FRNATCQMSK (609 aa)) are extracellular. Cysteine 29 and cysteine 40 are oxidised to a cystine. 2 N-linked (GlcNAc...) asparagine glycosylation sites follow: asparagine 35 and asparagine 73. 7 LRR repeats span residues 55–76 (STKM…NFSS), 79–100 (ELQV…TFQG), 103–124 (HLST…AFSG), 127–148 (SLQK…PIGH), 151–172 (TLKE…EYFS), 176–197 (NLEH…DVKV), and 205–225 (NLSL…TFKE). Asparagine 205, asparagine 238, asparagine 282, and asparagine 309 each carry an N-linked (GlcNAc...) asparagine glycan. Cysteines 281 and 306 form a disulfide. 9 LRR repeats span residues 352 to 373 (SLKK…FQLP), 374 to 395 (SLQY…SHAD), 400 to 422 (NLKH…MGLE), 423 to 444 (KLEH…SVFL), 448 to 469 (NLRY…IFTG), 472 to 495 (SLKT…FTEL), 497 to 518 (NLTV…AFHS), 521 to 542 (SLQV…LYEP), and 545 to 568 (LLRI…QNLP). Cysteine 390 and cysteine 391 are disulfide-bonded. N-linked (GlcNAc...) asparagine glycosylation is found at asparagine 497 and asparagine 526. 2 N-linked (GlcNAc...) asparagine glycosylation sites follow: asparagine 570 and asparagine 575. Residues 579 to 630 (NAFACVCEHQRFLQWVKDQRQLLVGAEQMMCAEPLDMKDMPVLSFRNATCQM) enclose the LRRCT domain. Cystine bridges form between cysteine 583-cysteine 609 and cysteine 585-cysteine 628. A glycan (N-linked (GlcNAc...) asparagine) is linked at asparagine 625. Residues 633–653 (MIISVSVVTVLLVSVVGVLVY) form a helical membrane-spanning segment. At 654–841 (KFYFHLMLLA…TNPQEATTST (188 aa)) the chain is on the cytoplasmic side. The 144-residue stretch at 673-816 (STYGAFVIYS…VFWRRLRKAL (144 aa)) folds into the TIR domain. A disordered region spans residues 820–841 (KPQSPEGTADAETNPQEATTST). The span at 830–841 (AETNPQEATTST) shows a compositional bias: polar residues.

Belongs to the Toll-like receptor family. In terms of assembly, belongs to the lipopolysaccharide (LPS) receptor, a multi-protein complex containing at least CD14, LY96 and TLR4. Binding to bacterial LPS leads to homodimerization. Interacts with LY96 via the extracellular domain. Interacts with MYD88 and TIRAP via their respective TIR domains. Interacts with TICAM2. Interacts with NOX4. Interacts with CNPY3 and HSP90B1; this interaction is required for proper folding in the endoplasmic reticulum. Interacts with MAP3K21; this interaction leads to negative regulation of TLR4 signaling. Interacts with CD36, following CD36 stimulation by oxLDL or amyloid-beta 42, and forms a heterodimer with TLR6. The trimeric complex is internalized and triggers inflammatory response. LYN kinase activity facilitates TLR4-TLR6 heterodimerization and signal initiation. Interacts with TICAM1 in response to LPS in a WDFY1-dependent manner. Interacts with WDFY1 in response to LPS. Interacts with SMPDL3B. Interacts with CEACAM1; upon lipopolysaccharide stimulation, forms a complex including TLR4 and the phosphorylated form of SYK and CEACAM1, which in turn, recruits PTPN6 that dephosphorylates SYK, reducing the production of reactive oxygen species (ROS) and lysosome disruption, which in turn, reduces the activity of the inflammasome. Interacts with RFTN1; the interaction occurs in response to lipopolysaccharide stimulation. Interacts with SCIMP; the interaction occurs in response to lipopolysaccharide stimulation and is enhanced by phosphorylation of SCIMP by LYN. This interaction facilitates the phosphorylation of TLR4 by LYN which elicits a selective cytokine response in macrophages. Interacts with TRAF3IP3. Interacts with TREM1; this interaction enhances TLR4-mediated inflammatory response. Interacts with ZG16B/PAUF. Interacts with CD82; this interaction inhibits TLR4-mediated signaling pathway. In terms of processing, phosphorylated on tyrosine residues by LYN after binding lipopolysaccharide. Post-translationally, ubiquitinated by RNF128 via 'Lys-28'-linked polyubiquitin chains, leading to proteasomal degradation.

The protein localises to the cell membrane. It is found in the early endosome. It localises to the cell projection. Its subcellular location is the ruffle. Functionally, transmembrane receptor that functions as a pattern recognition receptor recognizing pathogen- and damage-associated molecular patterns (PAMPs and DAMPs) to induce innate immune responses via downstream signaling pathways. At the plasma membrane, cooperates with LY96 to mediate the innate immune response to bacterial lipopolysaccharide (LPS). Also involved in LPS-independent inflammatory responses triggered by free fatty acids, such as palmitate, and Ni(2+). Mechanistically, acts via MYD88, TIRAP and TRAF6, leading to NF-kappa-B activation, cytokine secretion and the inflammatory response. Alternatively, CD14-mediated TLR4 internalization via endocytosis is associated with the initiation of a MYD88-independent signaling via the TICAM1-TBK1-IRF3 axis leading to type I interferon production. In addition to the secretion of proinflammatory cytokines, initiates the activation of NLRP3 inflammasome and formation of a positive feedback loop between autophagy and NF-kappa-B signaling cascade. In complex with TLR6, promotes inflammation in monocytes/macrophages by associating with TLR6 and the receptor CD86. Upon ligand binding, such as oxLDL or amyloid-beta 42, the TLR4:TLR6 complex is internalized and triggers inflammatory response, leading to NF-kappa-B-dependent production of CXCL1, CXCL2 and CCL9 cytokines, via MYD88 signaling pathway, and CCL5 cytokine, via TICAM1 signaling pathway. In myeloid dendritic cells, vesicular stomatitis virus glycoprotein G but not LPS promotes the activation of IRF7, leading to type I IFN production in a CD14-dependent manner. The polypeptide is Toll-like receptor 4 (TLR4) (Boselaphus tragocamelus (Nilgai)).